A 130-amino-acid chain; its full sequence is Small ribosomal subunit protein uS8 (130 aa).

Belongs to the universal ribosomal protein uS8 family. Part of the 30S ribosomal subunit. Contacts proteins S5 and S12.

One of the primary rRNA binding proteins, it binds directly to 16S rRNA central domain where it helps coordinate assembly of the platform of the 30S subunit. The sequence is that of Small ribosomal subunit protein uS8 from Nitrosococcus oceani (strain ATCC 19707 / BCRC 17464 / JCM 30415 / NCIMB 11848 / C-107).